Here is a 39-residue protein sequence, read N- to C-terminus: Cytochrome b559 subunit beta (39 aa).

The chain crosses the membrane as a helical span at residues 14-30 (WLAIHGLAVPTVFFLGS). Position 18 (His18) interacts with heme.

Belongs to the PsbE/PsbF family. Heterodimer of an alpha subunit and a beta subunit. PSII is composed of 1 copy each of membrane proteins PsbA, PsbB, PsbC, PsbD, PsbE, PsbF, PsbH, PsbI, PsbJ, PsbK, PsbL, PsbM, PsbT, PsbX, PsbY, PsbZ, Psb30/Ycf12, at least 3 peripheral proteins of the oxygen-evolving complex and a large number of cofactors. It forms dimeric complexes. Heme b serves as cofactor.

It localises to the plastid. Its subcellular location is the chloroplast thylakoid membrane. In terms of biological role, this b-type cytochrome is tightly associated with the reaction center of photosystem II (PSII). PSII is a light-driven water:plastoquinone oxidoreductase that uses light energy to abstract electrons from H(2)O, generating O(2) and a proton gradient subsequently used for ATP formation. It consists of a core antenna complex that captures photons, and an electron transfer chain that converts photonic excitation into a charge separation. This chain is Cytochrome b559 subunit beta, found in Staurastrum punctulatum (Green alga).